The primary structure comprises 209 residues: Large ribosomal subunit protein uL3 (209 aa).

The interval 128–166 (FGGGSRTHGQSDRLRAPGSVGGSSDPSRTFKGTRMAGRM) is disordered.

The protein belongs to the universal ribosomal protein uL3 family. Part of the 50S ribosomal subunit. Forms a cluster with proteins L14 and L19.

In terms of biological role, one of the primary rRNA binding proteins, it binds directly near the 3'-end of the 23S rRNA, where it nucleates assembly of the 50S subunit. In Chlorobaculum parvum (strain DSM 263 / NCIMB 8327) (Chlorobium vibrioforme subsp. thiosulfatophilum), this protein is Large ribosomal subunit protein uL3.